The primary structure comprises 75 residues: Small ribosomal subunit protein bS18 (75 aa).

This sequence belongs to the bacterial ribosomal protein bS18 family. Part of the 30S ribosomal subunit. Forms a tight heterodimer with protein bS6.

Its function is as follows. Binds as a heterodimer with protein bS6 to the central domain of the 16S rRNA, where it helps stabilize the platform of the 30S subunit. The polypeptide is Small ribosomal subunit protein bS18 (Baumannia cicadellinicola subsp. Homalodisca coagulata).